The chain runs to 252 residues: Large ribosomal subunit protein uL29m (252 aa).

Lys146 carries the N6-acetyllysine modification.

It belongs to the universal ribosomal protein uL29 family. In terms of assembly, component of the mitochondrial ribosome large subunit (39S) which comprises a 16S rRNA and about 50 distinct proteins.

Its subcellular location is the mitochondrion. The sequence is that of Large ribosomal subunit protein uL29m (MRPL47) from Bos taurus (Bovine).